The primary structure comprises 669 residues: UvrABC system protein C (669 aa).

Positions 16-95 (TNPGVYRFRD…IKEFKPRFNV (80 aa)) constitute a GIY-YIG domain. A UVR domain is found at 207-242 (KRFIGRLEKDMAAAVAELDYERAARVRDDIIALRKV).

It belongs to the UvrC family. Interacts with UvrB in an incision complex.

The protein resides in the cytoplasm. The UvrABC repair system catalyzes the recognition and processing of DNA lesions. UvrC both incises the 5' and 3' sides of the lesion. The N-terminal half is responsible for the 3' incision and the C-terminal half is responsible for the 5' incision. This chain is UvrABC system protein C, found in Arthrobacter sp. (strain FB24).